A 198-amino-acid polypeptide reads, in one-letter code: Probable GTP-binding protein EngB (198 aa).

The 174-residue stretch at 22-195 (HRNEVAFVGR…IDKLFLEFAT (174 aa)) folds into the EngB-type G domain. GTP contacts are provided by residues 30-37 (GRSNVGKS), 57-61 (GKTRL), 75-78 (DLPG), 142-145 (TKSD), and 174-176 (YSS). Mg(2+) is bound by residues serine 37 and threonine 59.

This sequence belongs to the TRAFAC class TrmE-Era-EngA-EngB-Septin-like GTPase superfamily. EngB GTPase family. Requires Mg(2+) as cofactor.

Functionally, necessary for normal cell division and for the maintenance of normal septation. In Clostridium botulinum (strain Eklund 17B / Type B), this protein is Probable GTP-binding protein EngB.